Here is a 402-residue protein sequence, read N- to C-terminus: S-adenosylmethionine synthase (402 aa).

An ATP-binding site is contributed by His16. Asp18 provides a ligand contact to Mg(2+). K(+) is bound at residue Glu44. Positions 57 and 103 each coordinate L-methionine. A flexible loop region spans residues 103-113 (QSPDIAQGVDT). ATP is bound by residues 178 to 180 (DGK), 249 to 250 (KF), Asp258, 264 to 265 (RK), Ala281, and Lys285. Asp258 provides a ligand contact to L-methionine. Lys289 is an L-methionine binding site.

This sequence belongs to the AdoMet synthase family. As to quaternary structure, homotetramer; dimer of dimers. Mg(2+) serves as cofactor. K(+) is required as a cofactor.

The protein localises to the cytoplasm. The enzyme catalyses L-methionine + ATP + H2O = S-adenosyl-L-methionine + phosphate + diphosphate. It participates in amino-acid biosynthesis; S-adenosyl-L-methionine biosynthesis; S-adenosyl-L-methionine from L-methionine: step 1/1. Catalyzes the formation of S-adenosylmethionine (AdoMet) from methionine and ATP. The overall synthetic reaction is composed of two sequential steps, AdoMet formation and the subsequent tripolyphosphate hydrolysis which occurs prior to release of AdoMet from the enzyme. The protein is S-adenosylmethionine synthase of Mycobacterium sp. (strain JLS).